A 376-amino-acid polypeptide reads, in one-letter code: UDP-N-acetylglucosamine 2-epimerase (376 aa).

Residues Arg10, Lys15, Asp95, Glu117, His213, Gln271, Phe276, 290–292, Glu296, and Arg313 contribute to the substrate site; that span reads SGG.

This sequence belongs to the UDP-N-acetylglucosamine 2-epimerase family. In terms of assembly, homodimer.

It is found in the cytoplasm. It catalyses the reaction UDP-N-acetyl-alpha-D-glucosamine = UDP-N-acetyl-alpha-D-mannosamine. It participates in bacterial outer membrane biogenesis; enterobacterial common antigen biosynthesis. With respect to regulation, allosterically activated by its substrate, UDP-GlcNAc. Its function is as follows. Catalyzes the reversible epimerization at C-2 of UDP-N-acetylglucosamine (UDP-GlcNAc) and thereby provides bacteria with UDP-N-acetylmannosamine (UDP-ManNAc), the activated donor of ManNAc residues. Also involved in bacteriophage N4 adsorption. In Escherichia coli (strain K12), this protein is UDP-N-acetylglucosamine 2-epimerase.